Here is a 220-residue protein sequence, read N- to C-terminus: Thioredoxin domain-containing protein (220 aa).

An N-terminal signal peptide occupies residues M1–A19. Residues T20–N141 form the Thioredoxin domain. Topologically, residues T20 to T181 are lumenal. An intrachain disulfide couples C64 to C67. The chain crosses the membrane as a helical span at residues I182–F202. Topologically, residues T203 to K220 are cytoplasmic. The short motif at K217–K220 is the Di-lysine motif element.

The protein belongs to the protein disulfide isomerase family.

The protein resides in the endoplasmic reticulum membrane. The chain is Thioredoxin domain-containing protein from Theileria parva (East coast fever infection agent).